A 370-amino-acid polypeptide reads, in one-letter code: Sensor histidine kinase DesK (370 aa).

Over 1-10 the chain is Extracellular; it reads MIKNHFTFQK. A helical membrane pass occupies residues 11–31; the sequence is LNGITPYIWTIFFILPFYFIW. Topologically, residues 32–36 are cytoplasmic; it reads KSSST. The helical transmembrane segment at 37–57 threads the bilayer; it reads FVIIVGIILTLLFFSVYRFAF. Residues 58–70 lie on the Extracellular side of the membrane; the sequence is VSKGWTIYLWGFL. A helical transmembrane segment spans residues 71–91; the sequence is LIGISTASITLFSYIYFAFFI. Over 92 to 103 the chain is Cytoplasmic; that stretch reads AYFIGNIKERVP. Residues 104–124 traverse the membrane as a helical segment; it reads FHILYYVHLISAAVAANFSLV. The Extracellular portion of the chain corresponds to 125 to 128; the sequence is LKKE. A helical transmembrane segment spans residues 129–149; the sequence is FFLTQIPFVVITLISAILLPF. The Cytoplasmic segment spans residues 150 to 370; the sequence is SIKSRKERER…LTMAIPNNSK (221 aa). Positions 186–369 constitute a Histidine kinase domain; sequence DLHDTLGQKL…KLTMAIPNNS (184 aa). At His-188 the chain carries Phosphohistidine; by autocatalysis.

It is found in the cell membrane. It carries out the reaction ATP + protein L-histidine = ADP + protein N-phospho-L-histidine.. In terms of biological role, member of the two-component regulatory system DesR/DesK, responsible for cold induction of the des gene coding for the Delta5 acyl-lipid desaturase. Acts as a sensor of the membrane fluidity. Probably activates DesR by phosphorylation. The protein is Sensor histidine kinase DesK (desK) of Bacillus subtilis (strain 168).